Reading from the N-terminus, the 401-residue chain is tRNA(Met) cytidine acetate ligase (401 aa).

ATP contacts are provided by residues 7–20 (IVEYNPFHNGHLYH), glycine 102, asparagine 164, and arginine 189.

The protein belongs to the TmcAL family.

It is found in the cytoplasm. The catalysed reaction is cytidine(34) in elongator tRNA(Met) + acetate + ATP = N(4)-acetylcytidine(34) in elongator tRNA(Met) + AMP + diphosphate. In terms of biological role, catalyzes the formation of N(4)-acetylcytidine (ac(4)C) at the wobble position of elongator tRNA(Met), using acetate and ATP as substrates. First activates an acetate ion to form acetyladenylate (Ac-AMP) and then transfers the acetyl group to tRNA to form ac(4)C34. The sequence is that of tRNA(Met) cytidine acetate ligase from Thermoanaerobacter sp. (strain X514).